We begin with the raw amino-acid sequence, 315 residues long: MKLLAVKVECSHELEDGLSFFMQDELDAQGIESRKRSDFVAEGQKHDSSLVELDDIENLPKDLELTAYFNYENADKKELVKKITDKIAEMKGYGLNTGEVSISTKEVADEDWNTAWQKYYHVIDFSRHLAIVPEWEDYHPAFSDQKLIRLDPGLAFGTGGHTTTQLVLLAMERALVKPMSVLDIGTGSGILAIAASKLGASHVLGTDISDEAVTAAKENIALNDVNNINVRKANLLKDIDDKYDLIVANILADILLELIPDLDSHLNKEGKVIFSGIDYLQLPKVEKALAENNFEIKMKMQEGRWIGLLIARKPD.

The S-adenosyl-L-methionine site is built by Thr-164, Gly-185, Asp-207, and Asn-249.

This sequence belongs to the methyltransferase superfamily. PrmA family.

It is found in the cytoplasm. It catalyses the reaction L-lysyl-[protein] + 3 S-adenosyl-L-methionine = N(6),N(6),N(6)-trimethyl-L-lysyl-[protein] + 3 S-adenosyl-L-homocysteine + 3 H(+). Functionally, methylates ribosomal protein L11. In Lactobacillus gasseri (strain ATCC 33323 / DSM 20243 / BCRC 14619 / CIP 102991 / JCM 1131 / KCTC 3163 / NCIMB 11718 / NCTC 13722 / AM63), this protein is Ribosomal protein L11 methyltransferase.